The following is a 240-amino-acid chain: Uridylate kinase (240 aa).

13–16 contributes to the ATP binding site; sequence KASG. The tract at residues 21-26 is involved in allosteric activation by GTP; that stretch reads GSQGFG. Gly55 is a UMP binding site. ATP is bound by residues Gly56 and Arg60. UMP contacts are provided by residues Asp75 and 136–143; that span reads TGNPFFTT. ATP is bound by residues Thr163, Gln164, Tyr169, and Asp172.

This sequence belongs to the UMP kinase family. In terms of assembly, homohexamer.

The protein localises to the cytoplasm. The enzyme catalyses UMP + ATP = UDP + ADP. It participates in pyrimidine metabolism; CTP biosynthesis via de novo pathway; UDP from UMP (UMPK route): step 1/1. Its activity is regulated as follows. Allosterically activated by GTP. Inhibited by UTP. Catalyzes the reversible phosphorylation of UMP to UDP. The chain is Uridylate kinase from Brucella anthropi (strain ATCC 49188 / DSM 6882 / CCUG 24695 / JCM 21032 / LMG 3331 / NBRC 15819 / NCTC 12168 / Alc 37) (Ochrobactrum anthropi).